The following is a 404-amino-acid chain: Protrudin (404 aa).

The disordered stretch occupies residues 1-25 (MQSSDRDLSGPEASPSVMPEVLSEC). The Cytoplasmic segment spans residues 1–63 (MQSSDRDLSG…LKDAGDGVRY (63 aa)). A sufficient for homooligomerization region spans residues 1 to 92 (MQSSDRDLSG…LFLTLNEGAW (92 aa)). Residues 1 to 205 (MQSSDRDLSG…LYLLPLCWVL (205 aa)) form a sufficient for localization to endoplasmic reticulum tubular network and for interactions with REEP1, REEP5, ATL1, ATL2, ATL3 and SPAST region. Positions 51–64 (LEPLKDAGDGVRYL) are necessary for interaction with RAB11A and function in neurite outgrowth. The chain crosses the membrane as a helical span at residues 64–85 (LLRWQMPLCSLLTCLGLNILFL). The Lumenal portion of the chain corresponds to 86–90 (TLNEG). Residues 91–109 (AWYSVGALIISVPALLGYL) form a helical membrane-spanning segment. At 110 to 187 (QEVCRAQLPE…NPVVSSQFYG (78 aa)) the chain is on the cytoplasmic side. Positions 188 to 208 (ALLGMVCMLYLLPLCWVLALL) form an intramembrane region, helical. At 209–404 (NSTLFLGNGE…CASCNQTLSK (196 aa)) the chain is on the cytoplasmic side. Positions 259–299 (DSTPAPTPTEDLTPGSVEEAEEAEPDEEFKDAIEEDDEGTP) are disordered. Residues 271–354 (TPGSVEEAEE…GCAATFSVLK (84 aa)) are necessary for interaction with KIF5A. Over residues 276 to 299 (EEAEEAEPDEEFKDAIEEDDEGTP) the composition is skewed to acidic residues. The necessary for interaction with VAPA stretch occupies residues 286-292 (EFKDAIE). Residues 337-403 (TNNFGNCAGC…VCASCNQTLS (67 aa)) form an FYVE-type zinc finger. Zn(2+)-binding residues include cysteine 343, cysteine 346, cysteine 359, cysteine 362, cysteine 367, cysteine 370, cysteine 395, and cysteine 398.

Can form homooligomers (monomers, dimers and tetramers). Interacts with FKBP8; may negatively regulate ZFYVE27 phosphorylation. Interacts with VAPA (via MSP domain); may regulate ZFYVE27 retention in the endoplasmic reticulum and its function in cell projections formation. Interacts with VAPB (via MSP domain). Interacts with RAB11A (GDP-bound form); regulates RAB11A. Interacts with RAB11B (GDP-bound form), REEP1, REEP5, ATL1, ATL2, ATL3, SPAST, SURF4, KIF5A, KIF5B, KIF5C and RTN3. Phosphorylated. Phosphorylation is induced by NGF through the MAPK/ERK pathway and modulates interaction with RAB11A.

It is found in the recycling endosome membrane. The protein resides in the endoplasmic reticulum membrane. Its subcellular location is the cell projection. The protein localises to the growth cone membrane. Functionally, key regulator of RAB11-dependent vesicular trafficking during neurite extension through polarized membrane transport. Promotes axonal elongation and contributes to the establishment of neuronal cell polarity. Involved in nerve growth factor-induced neurite formation in VAPA-dependent manner. Contributes to both the formation and stabilization of the tubular ER network. Involved in ER morphogenesis by regulating the sheet-to-tubule balance and possibly the density of tubule interconnections. Acts as an adapter protein that facilitates the interaction of KIF5A with VAPA, VAPB, SURF4, RAB11A, RAB11B and RTN3 and the ZFYVE27-KIF5A complex contributes to the transport of these proteins in neurons. Can induce formation of neurite-like membrane protrusions in non-neuronal cells in a KIF5A/B-dependent manner. The chain is Protrudin (Zfyve27) from Rattus norvegicus (Rat).